The sequence spans 322 residues: uncharacterized protein (322 aa).

The next 8 membrane-spanning stretches (helical) occupy residues 7 to 27, 54 to 74, 87 to 107, 128 to 148, 162 to 182, 209 to 229, 249 to 269, and 287 to 307; these read IQKI…IGAI, AFAL…LAMF, FVGF…LSGS, IAFC…ITFV, FLSV…YLLI, IGLT…LLPG, GIIS…LFLL, and VIYY…FELL.

It to E.coli YbhN.

The protein resides in the cell membrane. This is an uncharacterized protein from Synechocystis sp. (strain ATCC 27184 / PCC 6803 / Kazusa).